The following is a 106-amino-acid chain: Malonate decarboxylase acyl carrier protein (106 aa).

Serine 28 bears the O-(phosphoribosyl dephospho-coenzyme A)serine mark.

It belongs to the MdcC family. Covalently binds the prosthetic group of malonate decarboxylase.

It is found in the cytoplasm. In terms of biological role, subunit of malonate decarboxylase, it is an acyl carrier protein to which acetyl and malonyl thioester residues are bound via a 2'-(5''-phosphoribosyl)-3'-dephospho-CoA prosthetic group and turn over during the catalytic mechanism. This Stenotrophomonas maltophilia (strain R551-3) protein is Malonate decarboxylase acyl carrier protein.